The sequence spans 460 residues: Putative type II methyltransferase M.OihORF3336P (460 aa).

Positions 15-458 (PEVVDLFSGC…EAMKKNIQGG (444 aa)) constitute an SAM-dependent MTase C5-type domain. C97 is a catalytic residue.

This sequence belongs to the class I-like SAM-binding methyltransferase superfamily. C5-methyltransferase family.

The catalysed reaction is a 2'-deoxycytidine in DNA + S-adenosyl-L-methionine = a 5-methyl-2'-deoxycytidine in DNA + S-adenosyl-L-homocysteine + H(+). A methylase, recognizes the double-stranded sequence 5'-ACCGGT-3', methylates C-? on both strands. No endonuclease has been identified for this methylase. This Oceanobacillus iheyensis (strain DSM 14371 / CIP 107618 / JCM 11309 / KCTC 3954 / HTE831) protein is Putative type II methyltransferase M.OihORF3336P.